The primary structure comprises 213 residues: High frequency lysogenization protein HflD homolog (213 aa).

The stretch at 79–122 forms a coiled coil; sequence QGLNAELTRYTLSLMVLERKLSSAKGALNTLGDRINGLQRQLDH.

It belongs to the HflD family.

The protein localises to the cytoplasm. Its subcellular location is the cell inner membrane. This Salmonella agona (strain SL483) protein is High frequency lysogenization protein HflD homolog.